Here is a 371-residue protein sequence, read N- to C-terminus: Cathepsin W (371 aa).

Positions 1-21 (MTLTAHLSYFLVLLLAGQGLS) are cleaved as a signal peptide. A propeptide spanning residues 22-125 (DSLLTKDAGP…KVESNTWGES (104 aa)) is cleaved from the precursor. 2 N-linked (GlcNAc...) asparagine glycosylation sites follow: Asn48 and Asn112. Intrachain disulfides connect Cys148-Cys189, Cys182-Cys224, and Cys282-Cys347. Residue Cys151 is part of the active site. Asn203 carries an N-linked (GlcNAc...) asparagine glycan. Active-site residues include His289 and Asn326. Asn344 carries N-linked (GlcNAc...) asparagine glycosylation.

The protein belongs to the peptidase C1 family.

It is found in the endoplasmic reticulum. In terms of biological role, may have a specific function in the mechanism or regulation of T-cell cytolytic activity. This is Cathepsin W (Ctsw) from Mus musculus (Mouse).